We begin with the raw amino-acid sequence, 134 residues long: Isocitrate dehydrogenase [NAD] subunit alpha, mitochondrial (134 aa).

Residue Lys-37 is modified to N6-succinyllysine. The residue at position 50 (Thr-50) is a Phosphothreonine. 3 residues coordinate substrate: Arg-64, Arg-74, and Arg-95.

The protein belongs to the isocitrate and isopropylmalate dehydrogenases family. In terms of assembly, heterooligomer of subunits alpha (IDH3A), beta (IDH3B), and gamma (IDH3G) in the apparent ratio of 2:1:1. The heterodimer containing one IDH3A and one IDH3B subunit and the heterodimer containing one IDH3A and one IDH3G subunit assemble into a heterotetramer (which contains two subunits of IDH3A, one of IDH3B and one of IDH3G) and further into the heterooctamer. The cofactor is Mg(2+). Mn(2+) is required as a cofactor.

It localises to the mitochondrion. It carries out the reaction D-threo-isocitrate + NAD(+) = 2-oxoglutarate + CO2 + NADH. With respect to regulation, the heterotetramer and the heterodimer composed of IDH3A and IDH3G subunits can be allosterically activated by citrate (CIT) or/and ADP, and the two activators can act independently or synergistically. The heterodimer composed of IDH3A and IDH3B subunits cannot be allosterically regulated and the allosteric regulation of the heterotetramer is through the IDH3G subunit and not the IDH3B subunit. The IDH3G subunit contains the allosteric site which consists of a CIT-binding site and an ADP-binding site, and the binding of CIT and ADP causes conformational changes at the allosteric site which are transmitted to the active site in the catalytic subunit (IDH3A) through a cascade of conformational changes at the heterodimer interface, leading to stabilization of the isocitrate-binding at the active site and thus activation of the enzyme. ATP can activate the heterotetramer and the heterodimer composed of IDH3A and IDH3G subunits at low concentrations but inhibits their activities at high concentrations, whereas ATP exhibits only inhibitory effect on the heterodimer composed of IDH3A and IDH3B subunits. Functionally, catalytic subunit of the enzyme which catalyzes the decarboxylation of isocitrate (ICT) into alpha-ketoglutarate. The heterodimer composed of the alpha (IDH3A) and beta (IDH3B) subunits and the heterodimer composed of the alpha (IDH3A) and gamma (IDH3G) subunits, have considerable basal activity but the full activity of the heterotetramer (containing two subunits of IDH3A, one of IDH3B and one of IDH3G) requires the assembly and cooperative function of both heterodimers. The protein is Isocitrate dehydrogenase [NAD] subunit alpha, mitochondrial of Mesocricetus auratus (Golden hamster).